The primary structure comprises 204 residues: Octanoyltransferase (204 aa).

The region spanning 27 to 202 (QGGEEALLLL…RFQPFLHLHL (176 aa)) is the BPL/LPL catalytic domain. Residues 65 to 72 (RGGDVTYH), 132 to 134 (SIG), and 145 to 147 (GFA) contribute to the substrate site. C163 serves as the catalytic Acyl-thioester intermediate.

It belongs to the LipB family.

Its subcellular location is the cytoplasm. It catalyses the reaction octanoyl-[ACP] + L-lysyl-[protein] = N(6)-octanoyl-L-lysyl-[protein] + holo-[ACP] + H(+). It functions in the pathway protein modification; protein lipoylation via endogenous pathway; protein N(6)-(lipoyl)lysine from octanoyl-[acyl-carrier-protein]: step 1/2. Its function is as follows. Catalyzes the transfer of endogenously produced octanoic acid from octanoyl-acyl-carrier-protein onto the lipoyl domains of lipoate-dependent enzymes. Lipoyl-ACP can also act as a substrate although octanoyl-ACP is likely to be the physiological substrate. The protein is Octanoyltransferase of Geobacter sp. (strain M21).